A 48-amino-acid chain; its full sequence is uncharacterized protein (48 aa).

This is an uncharacterized protein from Acidianus convivator (ABV).